The chain runs to 391 residues: Homocysteine-responsive endoplasmic reticulum-resident ubiquitin-like domain member 1 protein (391 aa).

Residue Met1 is modified to N-acetylmethionine. Topologically, residues Met1–Asp263 are cytoplasmic. The 63-residue stretch at Val10–Leu72 folds into the Ubiquitin-like domain. Residues Asn90–Arg126 are disordered. A compositionally biased stretch (polar residues) spans Pro95–Gly124. An interaction with UBQLN1 region spans residues Gln115 to Ser200. Position 135 is a phosphoserine (Ser135). Residues Trp264–Tyr284 form a helical membrane-spanning segment. At Ser285 to Arg289 the chain is on the lumenal side. A helical membrane pass occupies residues Phe290–Phe310. The Cytoplasmic segment spans residues Arg311–Asn391. The disordered stretch occupies residues Asn317–His361. Basic and acidic residues predominate over residues Asp346–His361.

As to quaternary structure, interacts with PSEN1 and PSEN2. Interacts with UBXN6. Interacts with UBQLN1, UBQLN2 and UBQLN4. Component of the HRD1 complex, which comprises at least SYNV1/HRD1, FAM8A1, HERPUD1/HERP, OS9, SEL1L and UBE2J1. FAM8A1 binding to SYNV1 may promote recruitment of HERPUD1 to the HRD1 complex.

It is found in the endoplasmic reticulum membrane. Its function is as follows. Component of the endoplasmic reticulum quality control (ERQC) system also called ER-associated degradation (ERAD) involved in ubiquitin-dependent degradation of misfolded endoplasmic reticulum proteins. Binds to ubiquilins and this interaction is required for efficient degradation of CD3D via the ERAD pathway. The protein is Homocysteine-responsive endoplasmic reticulum-resident ubiquitin-like domain member 1 protein (Herpud1) of Mus musculus (Mouse).